A 251-amino-acid polypeptide reads, in one-letter code: CDP-diacylglycerol pyrophosphatase (251 aa).

A helical membrane pass occupies residues 4–24; the sequence is AGLLFLVMIVIAVVATGIGYW.

Belongs to the Cdh family.

Its subcellular location is the cell inner membrane. The catalysed reaction is a CDP-1,2-diacyl-sn-glycerol + H2O = a 1,2-diacyl-sn-glycero-3-phosphate + CMP + 2 H(+). The protein operates within phospholipid metabolism; CDP-diacylglycerol degradation; phosphatidate from CDP-diacylglycerol: step 1/1. This chain is CDP-diacylglycerol pyrophosphatase, found in Escherichia coli O45:K1 (strain S88 / ExPEC).